We begin with the raw amino-acid sequence, 148 residues long: D-aminoacyl-tRNA deacylase (148 aa).

The Gly-cisPro motif, important for rejection of L-amino acids signature appears at 136-137 (GP).

The protein belongs to the DTD family. Homodimer.

It localises to the cytoplasm. It catalyses the reaction glycyl-tRNA(Ala) + H2O = tRNA(Ala) + glycine + H(+). The enzyme catalyses a D-aminoacyl-tRNA + H2O = a tRNA + a D-alpha-amino acid + H(+). Functionally, an aminoacyl-tRNA editing enzyme that deacylates mischarged D-aminoacyl-tRNAs. Also deacylates mischarged glycyl-tRNA(Ala), protecting cells against glycine mischarging by AlaRS. Acts via tRNA-based rather than protein-based catalysis; rejects L-amino acids rather than detecting D-amino acids in the active site. By recycling D-aminoacyl-tRNA to D-amino acids and free tRNA molecules, this enzyme counteracts the toxicity associated with the formation of D-aminoacyl-tRNA entities in vivo and helps enforce protein L-homochirality. This chain is D-aminoacyl-tRNA deacylase, found in Kosmotoga olearia (strain ATCC BAA-1733 / DSM 21960 / TBF 19.5.1).